We begin with the raw amino-acid sequence, 153 residues long: 6,7-dimethyl-8-ribityllumazine synthase 1 (153 aa).

5-amino-6-(D-ribitylamino)uracil is bound by residues Phe-16, 47–49, and 76–78; these read ALE and MVI. 81-82 is a (2S)-2-hydroxy-3-oxobutyl phosphate binding site; it reads ET. The Proton donor role is filled by His-84. Residue Asn-109 participates in 5-amino-6-(D-ribitylamino)uracil binding. (2S)-2-hydroxy-3-oxobutyl phosphate is bound at residue Arg-123.

Belongs to the DMRL synthase family.

It carries out the reaction (2S)-2-hydroxy-3-oxobutyl phosphate + 5-amino-6-(D-ribitylamino)uracil = 6,7-dimethyl-8-(1-D-ribityl)lumazine + phosphate + 2 H2O + H(+). It functions in the pathway cofactor biosynthesis; riboflavin biosynthesis; riboflavin from 2-hydroxy-3-oxobutyl phosphate and 5-amino-6-(D-ribitylamino)uracil: step 1/2. Functionally, catalyzes the formation of 6,7-dimethyl-8-ribityllumazine by condensation of 5-amino-6-(D-ribitylamino)uracil with 3,4-dihydroxy-2-butanone 4-phosphate. This is the penultimate step in the biosynthesis of riboflavin. This Rhizobium meliloti (strain 1021) (Ensifer meliloti) protein is 6,7-dimethyl-8-ribityllumazine synthase 1.